The chain runs to 232 residues: Ribonuclease P protein component 3 (232 aa).

Belongs to the eukaryotic/archaeal RNase P protein component 3 family. In terms of assembly, consists of a catalytic RNA component and at least 4-5 protein subunits.

It localises to the cytoplasm. It carries out the reaction Endonucleolytic cleavage of RNA, removing 5'-extranucleotides from tRNA precursor.. Functionally, part of ribonuclease P, a protein complex that generates mature tRNA molecules by cleaving their 5'-ends. The chain is Ribonuclease P protein component 3 from Halobacterium salinarum (strain ATCC 29341 / DSM 671 / R1).